A 64-amino-acid polypeptide reads, in one-letter code: Putative antitoxin VapB51 (64 aa).

Possibly the antitoxin component of a type II toxin-antitoxin (TA) system. Its cognate toxin is VapC51. The chain is Putative antitoxin VapB51 from Mycobacterium tuberculosis (strain ATCC 25618 / H37Rv).